A 33-amino-acid polypeptide reads, in one-letter code: Mytimycin (33 aa).

It localises to the secreted. In terms of biological role, has antifungal activity against N.crassa and F.culmorum. The protein is Mytimycin of Mytilus edulis (Blue mussel).